The primary structure comprises 508 residues: Hydroxymethylglutaryl-CoA synthase, mitochondrial (508 aa).

Residues 1-37 (MQRLLTPVKRILQLTRAVQETSLTPARLLPVAHQRFS) constitute a mitochondrion transit peptide. K52 is subject to N6-succinyllysine. (3S)-3-hydroxy-3-methylglutaryl-CoA contacts are provided by E80 and A81. The residue at position 83 (K83) is an N6-acetyllysine; alternate. At K83 the chain carries N6-succinyllysine; alternate. The active-site Proton donor/acceptor is the E132. 3 residues coordinate (3S)-3-hydroxy-3-methylglutaryl-CoA: C166, N204, and T208. C166 acts as the Acyl-thioester intermediate in catalysis. Position 221 is an N6-succinyllysine (K221). Residue K243 is modified to N6-acetyllysine. K256 bears the N6-acetyllysine; alternate mark. The residue at position 256 (K256) is an N6-succinyllysine; alternate. Positions 258 and 301 each coordinate (3S)-3-hydroxy-3-methylglutaryl-CoA. Residue H301 is the Proton donor/acceptor of the active site. Position 306 is an N6-acetyllysine (K306). Residue K310 coordinates (3S)-3-hydroxy-3-methylglutaryl-CoA. K310 is modified (N6-acetyllysine; alternate). Position 310 is an N6-succinyllysine; alternate (K310). Position 333 is an N6-succinyllysine (K333). Residues K342, K350, K354, and K358 each carry the N6-acetyllysine; alternate modification. 4 positions are modified to N6-succinyllysine; alternate: K342, K350, K354, and K358. Positions 380 and 414 each coordinate (3S)-3-hydroxy-3-methylglutaryl-CoA. S433 bears the Phosphoserine mark. The residue at position 437 (K437) is an N6-acetyllysine. S440 is modified (phosphoserine). An N6-acetyllysine; alternate modification is found at K447. K447 is modified (N6-succinyllysine; alternate). Position 456 is a phosphoserine (S456). The residue at position 473 (K473) is an N6-acetyllysine; alternate. At K473 the chain carries N6-succinyllysine; alternate. Phosphoserine is present on S477.

It belongs to the thiolase-like superfamily. HMG-CoA synthase family. Homodimer. In terms of processing, succinylated. Desuccinylated by SIRT5. Succinylation, at least at Lys-83 and Lys-310, inhibits the enzymatic activity. In terms of tissue distribution, expression in liver is 200-fold higher than in any other tissue. Low expression in colon, kidney, testis, and pancreas. Very low expression in heart and skeletal muscle. Not detected in brain. As to expression, highest expression detected in heart and skeletal muscle.

It is found in the mitochondrion. The enzyme catalyses acetoacetyl-CoA + acetyl-CoA + H2O = (3S)-3-hydroxy-3-methylglutaryl-CoA + CoA + H(+). It participates in metabolic intermediate biosynthesis; (R)-mevalonate biosynthesis; (R)-mevalonate from acetyl-CoA: step 2/3. Catalyzes the first irreversible step in ketogenesis, condensing acetyl-CoA to acetoacetyl-CoA to form HMG-CoA, which is converted by HMG-CoA reductase (HMGCR) into mevalonate. In Homo sapiens (Human), this protein is Hydroxymethylglutaryl-CoA synthase, mitochondrial (HMGCS2).